The sequence spans 744 residues: Elongation factor G, mitochondrial (744 aa).

Residues 1-25 (MTISCLLRIRPALAKSFFENGQRAF) constitute a mitochondrion transit peptide. In terms of domain architecture, tr-type G spans 38–315 (ERIRNIGISA…AVLDYLPNPG (278 aa)). GTP-binding positions include 47-54 (AHIDSGKT), 114-118 (DTPGH), and 168-171 (NKLD).

Belongs to the TRAFAC class translation factor GTPase superfamily. Classic translation factor GTPase family. EF-G/EF-2 subfamily.

It is found in the mitochondrion. It functions in the pathway protein biosynthesis; polypeptide chain elongation. Functionally, mitochondrial GTPase that catalyzes the GTP-dependent ribosomal translocation step during translation elongation. During this step, the ribosome changes from the pre-translocational (PRE) to the post-translocational (POST) state as the newly formed A-site-bound peptidyl-tRNA and P-site-bound deacylated tRNA move to the P and E sites, respectively. Catalyzes the coordinated movement of the two tRNA molecules, the mRNA and conformational changes in the ribosome. This is Elongation factor G, mitochondrial from Culex quinquefasciatus (Southern house mosquito).